The primary structure comprises 479 residues: Ribulose bisphosphate carboxylase large chain (479 aa).

Positions 1–2 (MS) are excised as a propeptide. An N-acetylproline modification is found at proline 3. An N6,N6,N6-trimethyllysine modification is found at lysine 14. 2 residues coordinate substrate: asparagine 123 and threonine 173. Lysine 175 serves as the catalytic Proton acceptor. Lysine 177 provides a ligand contact to substrate. Mg(2+) contacts are provided by lysine 201, aspartate 203, and glutamate 204. At lysine 201 the chain carries N6-carboxylysine. The active-site Proton acceptor is the histidine 294. Substrate contacts are provided by arginine 295, histidine 327, and serine 379.

This sequence belongs to the RuBisCO large chain family. Type I subfamily. Heterohexadecamer of 8 large chains and 8 small chains. It depends on Mg(2+) as a cofactor.

It localises to the plastid. The protein resides in the chloroplast. It catalyses the reaction 2 (2R)-3-phosphoglycerate + 2 H(+) = D-ribulose 1,5-bisphosphate + CO2 + H2O. It carries out the reaction D-ribulose 1,5-bisphosphate + O2 = 2-phosphoglycolate + (2R)-3-phosphoglycerate + 2 H(+). In terms of biological role, ruBisCO catalyzes two reactions: the carboxylation of D-ribulose 1,5-bisphosphate, the primary event in carbon dioxide fixation, as well as the oxidative fragmentation of the pentose substrate in the photorespiration process. Both reactions occur simultaneously and in competition at the same active site. The sequence is that of Ribulose bisphosphate carboxylase large chain from Jasminum nudiflorum (Winter jasmine).